Reading from the N-terminus, the 459-residue chain is MTDLMTSCALPLTGDAGTVASMRRGACPSLAEPMQTGDGLLVRVRPTDDSLTLPKVIALATAAERFGNGIIEITARGNLQLRGLSAASVPRLAQAIGDAEIAIAEGLAIEVPPLAGIDPDEIADPRPIATELREALDVRQVPLKLAPKLSVVIDSGGRFGLGAVVADIRLQAVSTVAGVAWVLSLGGTSTKASSVGTLAGNAVVPALITILEKLASLGTTMRGRDLDPSEIRALCRCETSSERPAAPRSAAIPGIHALGNADTVLGLGLAFAQVEAAALASYLHQVQALGANAIRLAPGHAFFVLGLCPETAAVAQSLAASHGFRIAEQDPRNAIATCAGSKGCASAWMETKGMAERLVETAPELLDGSLTVHLSGCAKGCARPKPSELTLVGAPSGYGLVVNGAANGLPSAYTDENGMGSALARLGRLVRQNKDAGESAQSCLTRLGAARVSAAFEQG.

Cys338, Cys344, Cys377, and Cys381 together coordinate [4Fe-4S] cluster. Position 381 (Cys381) interacts with siroheme.

The protein belongs to the nitrite and sulfite reductase 4Fe-4S domain family.

The enzyme catalyses precorrin-3A + NADH + O2 + 2 H(+) = precorrin-3B + NAD(+) + H2O. It functions in the pathway cofactor biosynthesis; adenosylcobalamin biosynthesis; cob(II)yrinate a,c-diamide from precorrin-2 (aerobic route): step 2/10. In terms of biological role, catalyzes the elimination of C-20 in precorrin-3A to form precorrin-3B. The polypeptide is Precorrin-3B synthase (cobG) (Sinorhizobium sp).